The chain runs to 508 residues: uncharacterized protein (508 aa).

The helical transmembrane segment at 7–29 threads the bilayer; sequence ALAIVLALILSLALPELLFQLYP.

The protein resides in the membrane. This is an uncharacterized protein from Archaeoglobus fulgidus (strain ATCC 49558 / DSM 4304 / JCM 9628 / NBRC 100126 / VC-16).